The following is a 183-amino-acid chain: Nucleoplasmin-like protein NO29 (183 aa).

Positions 126 to 166 (SDDEDLSGSEEEMEDEEEEEDDDDDDDDDDDDDDDDDEEEI) are enriched in acidic residues. The tract at residues 126–183 (SDDEDLSGSEEEMEDEEEEEDDDDDDDDDDDDDDDDDEEEITPIKPAKKPLKTLSRTF) is disordered.

Belongs to the nucleoplasmin family.

It is found in the nucleus. The protein localises to the nucleolus. The chain is Nucleoplasmin-like protein NO29 from Xenopus laevis (African clawed frog).